The primary structure comprises 1535 residues: MEPRMESCLAQVLQKDVGKRLQVGQELIDYFSDRQKSADLEHDQTLLDKLVDGLATSWVNSSNYKVVLLGMDILSALVTRLQDRFKAQIGTVLPSLIDRLGDAKDSVREQDQTLLLKIMDQAANPQYVWDRMLGGFKHKNFRTREGICLCLIATLNASGAQTLTLSKIVPHICNLLGDPNSQVRDAAINSLVEIYRHVGERVRADLSKKGLPQSRLNVIFTKFDEVQKSGNMIQSANEKNFDDEDSVDGNRPSSASSSSSKAPSSSRRNVNLGTTRRLMSSSLGSKSSAAKEGAGAVDEEDFIKAFDDVPVVQIYSSRDLEESINKIREILSDDKHDWEQRVNALKKIRSLLLAGAAEYDNFFQHLRLLDGAFKLSAKDLRSQVVREACITLGHLSSVLGNKFDHGAEAIMPTIFNLIPNSAKIMATSGVVAVRLIIRHTHIPRLIPVITSNCTSKSVAVRRRCFEFLDLLLQEWQTHSLERHISVLAETIKKGIHDADSEARIEARKCYWGFHSHFSREAEHLYHTLESSYQKALQSHLKNSDSIVSLPQSDRSSSSSQESLNRPLSAKRSPTGSTASRGSTVSTKSVSTTGSLQRSRSDIDVNAAASAKSKVSSSSGSPAFSSAAALPPGSYASLGRIRTRRQSSGSTTNVASTPDSRGRSRAKVVSQSQRSRSANPAGAGSRSSSPGKLLGSGLAGGSSRGPPVTPSSEKRSKIPRSQGCSRETSPNRIGLARSSRIPRPSMSQGCSRDTSRESSRDTSPARGFTPLDRFGLGQSGRIPGSVNAMRVLSTSTDLEAAVADALKKPVRRRYEPYGMYSDDDANSDASSVCSERSYGSRNGGIPHYLRQTEDVAEVLNHCASSNWSERKEGLLGLQNLLKSQRTLSRVELKRLCEIFTRMFADPHSKRVFSMFLETLVDFIIIHKDDLQDWLFVLLTQLLKKMGADLLGSVQAKVQKALDVTRDSFPFDQQFNILMRFIVDQTQTPNLKVKVAILKYIESLARQMDPTDFVNSSETRLAVSRIITWTTEPKSSDVRKAAQIVLISLFELNTPEFTMLLGALPKTFQDGATKLLHNHLKNSSNTGVGSPSNTIGRTPSRHPSSRTSPLTSPTNCSHGGLSPSRLWGWSADGLSKPPPPFSQPNSIPTAPSHKTLRRSYSPSMLDYDTENLNSEEIYSSLRGVTEAIEKFSFRSQEDLNEPIKRDGKKDCDIVSRDGGAASPATEGRGGSEIEGGRMALDNKTSLLNTQPPRAFPGPRAREYNPYPYSDTINTYDKTALKEAVFDDDMEQLRDVPIDHSDLVADLLKELSNHNERVEERKGALLELLKITREDSLGVWEEHFKTILLLLLETLGDKDHSIRALALRVLREILRNQPARFKNYAELTIMKTLEAHKDSHKEVVRAAEEAASTLASSIHPEQCIKVLCPIIQTADYPINLAAIKMQTKVVERITKESLLQLLVDIIPGLLQGYDNTESSVRKASVFCLVAIYSVIGEDLKPHLAQLTGSKMKLLNLYIKRAQTTNSNSSSSSDVSTHS.

HEAT repeat units follow at residues 87 to 124 (AQIG…QAAN) and 163 to 200 (LTLS…HVGE). The interval 237-290 (NEKNFDDEDSVDGNRPSSASSSSSKAPSSSRRNVNLGTTRRLMSSSLGSKSSAA) is disordered. Phosphoserine is present on Ser246. Over residues 252-266 (PSSASSSSSKAPSSS) the composition is skewed to low complexity. Residues 267–279 (RRNVNLGTTRRLM) show a composition bias toward polar residues. The span at 280 to 290 (SSSLGSKSSAA) shows a compositional bias: low complexity. HEAT repeat units lie at residues 405–440 (HGAE…IRHT) and 441–477 (HIPR…EWQT). Disordered stretches follow at residues 543–600 (SDSI…RSRS) and 612–782 (SKVS…GRIP). 5 positions are modified to phosphoserine: Ser545, Ser548, Ser558, Ser559, and Ser568. The span at 548 to 567 (SLPQSDRSSSSSQESLNRPL) shows a compositional bias: low complexity. Over residues 579–594 (SRGSTVSTKSVSTTGS) the composition is skewed to low complexity. Residue Ser600 is modified to Phosphoserine. The segment covering 612–633 (SKVSSSSGSPAFSSAAALPPGS) has biased composition (low complexity). Phosphoserine occurs at positions 636, 646, 647, and 649. Residues 645–658 (QSSGSTTNVASTPD) show a composition bias toward polar residues. Thr656 is subject to Phosphothreonine. Residues 662–782 (RSRAKVVSQS…FGLGQSGRIP (121 aa)) form an interaction with microtubules, MAPRE1 and MAPRE3 region. Over residues 673–695 (RSRSANPAGAGSRSSSPGKLLGS) the composition is skewed to low complexity. Phosphoserine occurs at positions 684, 688, 695, and 702. Thr708 carries the phosphothreonine modification. The residue at position 711 (Ser711) is a Phosphoserine. A compositionally biased stretch (polar residues) spans 721-730 (QGCSRETSPN). Phosphoserine is present on residues Ser784, Ser794, and Ser820. The HEAT 5 repeat unit spans residues 971-1008 (QQFNILMRFIVDQTQTPNLKVKVAILKYIESLARQMDP). A disordered region spans residues 1078 to 1157 (LKNSSNTGVG…APSHKTLRRS (80 aa)). Positions 1079 to 1094 (KNSSNTGVGSPSNTIG) are enriched in polar residues. Ser1088 carries the phosphoserine modification. Phosphothreonine occurs at positions 1092 and 1096. Positions 1103–1112 (SRTSPLTSPT) are enriched in low complexity. Residues Ser1110, Phe1139, and Ser1193 each carry the phosphoserine modification. Positions 1200–1213 (PIKRDGKKDCDIVS) are enriched in basic and acidic residues. Disordered regions lie at residues 1200-1233 (PIKR…EIEG) and 1245-1266 (LNTQ…PYPY). Ser1220 carries the post-translational modification Phosphoserine. The tract at residues 1251-1535 (RAFPGPRARE…SSSSDVSTHS (285 aa)) is interaction with CLIP2 and RSN. Positions 1251–1535 (RAFPGPRARE…SSSSDVSTHS (285 aa)) are interaction with PHLDB2. Positions 1253–1535 (FPGPRAREYN…SSSSDVSTHS (283 aa)) are localization to kinetochores. Residues 1296–1327 (DHSDLVADLLKELSNHNERVEERKGALLELLK) are a coiled coil. 2 HEAT repeats span residues 1339–1376 (EHFK…NQPA) and 1457–1494 (QLLV…VIGE).

This sequence belongs to the CLASP family. In terms of assembly, interacts with ERC1, MAPRE1, MAPRE3, microtubules, and PHLDB2. The interaction with ERC1 may be mediated by PHLDB2. Interacts with GCC2; recruits CLASP1 to Golgi membranes. Interacts with CLIP2 and RSN. Interacts with MACF1. Interacts with mtcl2 and MTCL1. In terms of tissue distribution, highly expressed in brain and heart and at lower levels in kidney, lung, skeletal muscle and testis.

Its subcellular location is the cytoplasm. It is found in the cytoskeleton. The protein resides in the microtubule organizing center. It localises to the centrosome. The protein localises to the chromosome. Its subcellular location is the centromere. It is found in the kinetochore. The protein resides in the spindle. It localises to the golgi apparatus. The protein localises to the trans-Golgi network. Its function is as follows. Microtubule plus-end tracking protein that promotes the stabilization of dynamic microtubules. Involved in the nucleation of noncentrosomal microtubules originating from the trans-Golgi network (TGN). Required for the polarization of the cytoplasmic microtubule arrays in migrating cells towards the leading edge of the cell. May act at the cell cortex to enhance the frequency of rescue of depolymerizing microtubules by attaching their plus-ends to cortical platforms composed of ERC1 and PHLDB2. This cortical microtubule stabilizing activity is regulated at least in part by phosphatidylinositol 3-kinase signaling. Also performs a similar stabilizing function at the kinetochore which is essential for the bipolar alignment of chromosomes on the mitotic spindle. The polypeptide is CLIP-associating protein 1 (Clasp1) (Mus musculus (Mouse)).